A 501-amino-acid chain; its full sequence is Cytochrome P450 7A1 (501 aa).

A helical membrane pass occupies residues 4–24 (IFWIWGICLSVCCCLWLILGL). C441 provides a ligand contact to heme.

This sequence belongs to the cytochrome P450 family. It depends on heme as a cofactor. In terms of tissue distribution, detected in liver.

The protein resides in the endoplasmic reticulum membrane. The protein localises to the microsome membrane. It catalyses the reaction cholesterol + reduced [NADPH--hemoprotein reductase] + O2 = 7alpha-hydroxycholesterol + oxidized [NADPH--hemoprotein reductase] + H2O + H(+). The enzyme catalyses 4beta-hydroxycholesterol + reduced [NADPH--hemoprotein reductase] + O2 = 4beta,7alpha-dihydroxycholesterol + oxidized [NADPH--hemoprotein reductase] + H2O + H(+). The catalysed reaction is lathosterol + reduced [NADPH--hemoprotein reductase] + O2 = 7alpha,8alpha-epoxy-5alpha-cholestan-3beta-ol + oxidized [NADPH--hemoprotein reductase] + H2O + H(+). It carries out the reaction lathosterol + reduced [NADPH--hemoprotein reductase] + O2 = 5alpha-cholestan-7-oxo-3beta-ol + oxidized [NADPH--hemoprotein reductase] + H2O + H(+). It catalyses the reaction 7-dehydrocholesterol + reduced [NADPH--hemoprotein reductase] + O2 = 7-oxocholesterol + oxidized [NADPH--hemoprotein reductase] + H2O + H(+). The enzyme catalyses (24S)-hydroxycholesterol + reduced [NADPH--hemoprotein reductase] + O2 = (24S)-7alpha-dihydroxycholesterol + oxidized [NADPH--hemoprotein reductase] + H2O + H(+). The catalysed reaction is (24R)-hydroxycholesterol + reduced [NADPH--hemoprotein reductase] + O2 = (24R)-7alpha-dihydroxycholesterol + oxidized [NADPH--hemoprotein reductase] + H2O + H(+). It participates in lipid metabolism; bile acid biosynthesis. The protein operates within steroid metabolism; cholesterol degradation. A cytochrome P450 monooxygenase involved in the metabolism of endogenous cholesterol and its oxygenated derivatives (oxysterols). Mechanistically, uses molecular oxygen inserting one oxygen atom into a substrate, and reducing the second into a water molecule, with two electrons provided by NADPH via cytochrome P450 reductase (CPR; NADPH-ferrihemoprotein reductase). Functions as a critical regulatory enzyme of bile acid biosynthesis and cholesterol homeostasis. Catalyzes the hydroxylation of carbon hydrogen bond at 7-alpha position of cholesterol, a rate-limiting step in cholesterol catabolism and bile acid biosynthesis. 7-alpha hydroxylates several oxysterols, including 4beta-hydroxycholesterol and 24-hydroxycholesterol. Catalyzes the oxidation of the 7,8 double bond of 7-dehydrocholesterol and lathosterol with direct and predominant formation of the 7-keto derivatives. This Oryctolagus cuniculus (Rabbit) protein is Cytochrome P450 7A1 (CYP7A1).